The sequence spans 453 residues: Ribulose bisphosphate carboxylase large chain (453 aa).

Positions 1–2 are excised as a propeptide; that stretch reads MS. The residue at position 3 (proline 3) is an N-acetylproline. Lysine 14 is subject to N6,N6,N6-trimethyllysine. Asparagine 123 and threonine 173 together coordinate substrate. Residue lysine 175 is the Proton acceptor of the active site. Lysine 177 contributes to the substrate binding site. Positions 201, 203, and 204 each coordinate Mg(2+). Lysine 201 carries the N6-carboxylysine modification. The active-site Proton acceptor is histidine 294. Residues arginine 295, histidine 327, and serine 379 each coordinate substrate.

The protein belongs to the RuBisCO large chain family. Type I subfamily. Heterohexadecamer of 8 large chains and 8 small chains; disulfide-linked. The disulfide link is formed within the large subunit homodimers. Mg(2+) serves as cofactor. The disulfide bond which can form in the large chain dimeric partners within the hexadecamer appears to be associated with oxidative stress and protein turnover.

The protein resides in the plastid. The protein localises to the chloroplast. It carries out the reaction 2 (2R)-3-phosphoglycerate + 2 H(+) = D-ribulose 1,5-bisphosphate + CO2 + H2O. The catalysed reaction is D-ribulose 1,5-bisphosphate + O2 = 2-phosphoglycolate + (2R)-3-phosphoglycerate + 2 H(+). In terms of biological role, ruBisCO catalyzes two reactions: the carboxylation of D-ribulose 1,5-bisphosphate, the primary event in carbon dioxide fixation, as well as the oxidative fragmentation of the pentose substrate in the photorespiration process. Both reactions occur simultaneously and in competition at the same active site. This chain is Ribulose bisphosphate carboxylase large chain, found in Galium elongatum (Great marsh bedstraw).